The primary structure comprises 128 residues: MAKPRRTGKKERKNIPVGVAHIQATFNNTIVTFTDQKGNVVSWATSGGAGFKGSRKSTPFAAQVAAENAARKAQENGMRTVGVLVKGPGSGREAAMRAIHNAGFKISYIRDITPIPHNGCRPPKRRRV.

The protein belongs to the universal ribosomal protein uS11 family. In terms of assembly, part of the 30S ribosomal subunit. Interacts with proteins S7 and S18. Binds to IF-3.

Its function is as follows. Located on the platform of the 30S subunit, it bridges several disparate RNA helices of the 16S rRNA. Forms part of the Shine-Dalgarno cleft in the 70S ribosome. The polypeptide is Small ribosomal subunit protein uS11 (Solidesulfovibrio magneticus (strain ATCC 700980 / DSM 13731 / RS-1) (Desulfovibrio magneticus)).